We begin with the raw amino-acid sequence, 73 residues long: uncharacterized protein (73 aa).

N-glycosylated.

This is an uncharacterized protein from Saccharomyces cerevisiae (strain ATCC 204508 / S288c) (Baker's yeast).